The primary structure comprises 415 residues: Probable G-protein coupled receptor 19 (415 aa).

At 1–69 (MGFDHRMETD…LNPGEVATAS (69 aa)) the chain is on the extracellular side. N25 and N52 each carry an N-linked (GlcNAc...) asparagine glycan. The chain crosses the membrane as a helical span at residues 70-90 (IFFGALWLFSIFGNSLVCLVI). The Cytoplasmic segment spans residues 91-102 (HRSRRTQSTTNY). Residues 103–123 (FVVSMACADLLISVASTPFVV) traverse the membrane as a helical segment. Residues 124–152 (LQFTTGRWTLGSAMCKVVRYFQYLTPGVQ) are Extracellular-facing. A disulfide bridge links C138 with C210. Residues 153–173 (IYVLLSICIDRFYTIVYPLSF) traverse the membrane as a helical segment. The Cytoplasmic segment spans residues 174 to 182 (KVSREKAKR). A helical transmembrane segment spans residues 183 to 203 (MIAASWILDAAFVTPVFFFYG). Over 204–221 (SNWDSHCNYFLPPSWEGT) the chain is Extracellular. Residues 222–242 (AYTVIHFLVGFVIPSVLIILF) form a helical membrane-spanning segment. The Cytoplasmic portion of the chain corresponds to 243 to 277 (YQKVIKYIWRIGTDGRTLRRTMNIVPRTKVKTVKM). A helical membrane pass occupies residues 278 to 298 (FLLLNLVFLFSWLPFHVAQLW). At 299–309 (HPHEQDYRKSS) the chain is on the extracellular side. The chain crosses the membrane as a helical span at residues 310–332 (LVFTAVTWVSFSSSASKPTLYSI). Residues 333-415 (YNANFRRGMK…INSNPPNTFV (83 aa)) lie on the Cytoplasmic side of the membrane.

The protein belongs to the G-protein coupled receptor 1 family. In terms of tissue distribution, abundant expression in the brain.

The protein resides in the cell membrane. Functionally, G-protein coupled receptor that plays a role in the regulation of circadian rhythms and energy metabolism. Participates in maintaining proper circadian gene expression in the suprachiasmatic nucleus (SCN), the locus of the master circadian clock in the brain. May function as a coordinator of aging-associated metabolic dysfunction, stress response, DNA integrity management, and eventual senescence. Upon binding to adropin, modulates mitochondrial energy metabolism via the p44/42-PDK4 signaling pathway, influencing pyruvate dehydrogenase activity. This Rattus norvegicus (Rat) protein is Probable G-protein coupled receptor 19 (Gpr19).